The chain runs to 227 residues: Protein FAM3C (227 aa).

The signal sequence occupies residues 1–24 (MRVAGAAKLVVAVAVFLLTFYVIS). 2 cysteine pairs are disulfide-bonded: Cys-58–Cys-86 and Cys-64–Cys-221. The GG-type lectin domain maps to 67–225 (KHFAFKMASG…VEMEGCIPQK (159 aa)).

This sequence belongs to the FAM3 family.

The protein resides in the secreted. Its subcellular location is the cytoplasmic vesicle. May be involved in retinal laminar formation. Promotes epithelial to mesenchymal transition. The protein is Protein FAM3C (Fam3c) of Rattus norvegicus (Rat).